The primary structure comprises 160 residues: Protein-export protein SecB (160 aa).

It belongs to the SecB family. As to quaternary structure, homotetramer, a dimer of dimers. One homotetramer interacts with 1 SecA dimer.

The protein resides in the cytoplasm. One of the proteins required for the normal export of preproteins out of the cell cytoplasm. It is a molecular chaperone that binds to a subset of precursor proteins, maintaining them in a translocation-competent state. It also specifically binds to its receptor SecA. This chain is Protein-export protein SecB, found in Nitrosomonas eutropha (strain DSM 101675 / C91 / Nm57).